Reading from the N-terminus, the 156-residue chain is Ribosome maturation factor RimP (156 aa).

This sequence belongs to the RimP family.

It localises to the cytoplasm. Functionally, required for maturation of 30S ribosomal subunits. This Dictyoglomus thermophilum (strain ATCC 35947 / DSM 3960 / H-6-12) protein is Ribosome maturation factor RimP.